The following is a 274-amino-acid chain: Large ribosomal subunit protein uL2 (274 aa).

Residues 221–274 (RGTAMNPVDHPHGGGEGRNFGKHPVTPWGVQTKGKKTRSNKRTDKFIVRRRSKK) form a disordered region.

This sequence belongs to the universal ribosomal protein uL2 family. In terms of assembly, part of the 50S ribosomal subunit. Forms a bridge to the 30S subunit in the 70S ribosome.

In terms of biological role, one of the primary rRNA binding proteins. Required for association of the 30S and 50S subunits to form the 70S ribosome, for tRNA binding and peptide bond formation. It has been suggested to have peptidyltransferase activity; this is somewhat controversial. Makes several contacts with the 16S rRNA in the 70S ribosome. In Yersinia pseudotuberculosis serotype O:1b (strain IP 31758), this protein is Large ribosomal subunit protein uL2.